The primary structure comprises 105 residues: ATP synthase F(0) complex subunit a (105 aa).

Helical transmembrane passes span 14–34, 47–67, and 72–92; these read EGTPVPLIPVLIIIETISLFI, LTAGHLLIQLIATAAFVLLPM, and AILTSIVLFLLTLLEIAVAMI.

It belongs to the ATPase A chain family. In terms of assembly, component of the ATP synthase complex composed at least of ATP5F1A/subunit alpha, ATP5F1B/subunit beta, ATP5MC1/subunit c (homooctomer), MT-ATP6/subunit a, MT-ATP8/subunit 8, ATP5ME/subunit e, ATP5MF/subunit f, ATP5MG/subunit g, ATP5MK/subunit k, ATP5MJ/subunit j, ATP5F1C/subunit gamma, ATP5F1D/subunit delta, ATP5F1E/subunit epsilon, ATP5PF/subunit F6, ATP5PB/subunit b, ATP5PD/subunit d, ATP5PO/subunit OSCP. ATP synthase complex consists of a soluble F(1) head domain (subunits alpha(3) and beta(3)) - the catalytic core - and a membrane F(0) domain - the membrane proton channel (subunits c, a, 8, e, f, g, k and j). These two domains are linked by a central stalk (subunits gamma, delta, and epsilon) rotating inside the F1 region and a stationary peripheral stalk (subunits F6, b, d, and OSCP). Interacts with DNAJC30; interaction is direct.

Its subcellular location is the mitochondrion inner membrane. The catalysed reaction is H(+)(in) = H(+)(out). In terms of biological role, subunit a, of the mitochondrial membrane ATP synthase complex (F(1)F(0) ATP synthase or Complex V) that produces ATP from ADP in the presence of a proton gradient across the membrane which is generated by electron transport complexes of the respiratory chain. ATP synthase complex consist of a soluble F(1) head domain - the catalytic core - and a membrane F(1) domain - the membrane proton channel. These two domains are linked by a central stalk rotating inside the F(1) region and a stationary peripheral stalk. During catalysis, ATP synthesis in the catalytic domain of F(1) is coupled via a rotary mechanism of the central stalk subunits to proton translocation. With the subunit c (ATP5MC1), forms the proton-conducting channel in the F(0) domain, that contains two crucial half-channels (inlet and outlet) that facilitate proton movement from the mitochondrial intermembrane space (IMS) into the matrix. Protons are taken up via the inlet half-channel and released through the outlet half-channel, following a Grotthuss mechanism. The polypeptide is ATP synthase F(0) complex subunit a (Salmo trutta (Brown trout)).